Reading from the N-terminus, the 38-residue chain is MTVYESLMIMINFGGLILNTVLLIFNIMMIVTSSQKKK.

The chain crosses the membrane as a helical span at residues 11–31 (INFGGLILNTVLLIFNIMMIV).

Its subcellular location is the cell membrane. In terms of biological role, toxic component of a type I toxin-antitoxin (TA) system; expression in the absence of cognate antisense antitoxin SR4 RNA leads to cell lysis. Induced expression causes membrane invaginations that dislocate the cell wall synthesis machinery, leading to eventual death. Unlike many type I TA systems it does not form pores. Base pairing occurs between the 3' UTRs of bsrG mRNA and SR4 RNA, which leads to initiation of degradation by RNase III (rnc) followed by the action of RNase Y (rny) and RNase R (rnr). Not toxic when expressed in E.coli. When induced during logarithmic growth it only slowly exerts its toxic effect. Expression during log growth leads to significant disturbances of cell envelope biosynthesis and cell morphology, causing cell membrane invaginations and delocalization of cell division and cell wall synthesis machinery. Cell lysis depends on mreB, lytC and lytD, suggesting expression of bsrG triggers autolysis rather than disintegration of the membrane. Additionally expression of bsrG also inhibits transcription. This Bacillus subtilis (strain 168) protein is Small toxic protein BsrG.